An 87-amino-acid polypeptide reads, in one-letter code: MSGISPTELQNLDEPSKKEIMGFLETENSKQKVQMSIHQFTNLCFKNCIHSVQSADLSAQENQCLKDCVNRFLDTNIRIVKGLQSIQ.

The Twin CX3C motif signature appears at 44 to 68; the sequence is CFKNCIHSVQSADLSAQENQCLKDC. 2 disulfide bridges follow: C44–C68 and C48–C64.

Belongs to the small Tim family. In terms of assembly, heterohexamer; composed of 3 copies of TIM8 and 3 copies of TIM13, named soluble 70 kDa complex. Associates with the TIM22 complex, whose core is composed of TIM22 and TIM54. Interacts with the transmembrane regions of multi-pass transmembrane proteins in transit.

It localises to the mitochondrion inner membrane. Functionally, mitochondrial intermembrane chaperone that participates in the import and insertion of some multi-pass transmembrane proteins into the mitochondrial inner membrane. Also required for the transfer of beta-barrel precursors from the TOM complex to the sorting and assembly machinery (SAM complex) of the outer membrane. Acts as a chaperone-like protein that protects the hydrophobic precursors from aggregation and guide them through the mitochondrial intermembrane space. The TIM8-TIM13 complex is non essential and only mediates the import of few proteins, while the predominant TIM9-TIM10 70 kDa complex is crucial and mediates the import of much more proteins. The chain is Mitochondrial import inner membrane translocase subunit TIM8 (TIM8) from Eremothecium gossypii (strain ATCC 10895 / CBS 109.51 / FGSC 9923 / NRRL Y-1056) (Yeast).